We begin with the raw amino-acid sequence, 278 residues long: NAD kinase (278 aa).

Aspartate 56 serves as the catalytic Proton acceptor. NAD(+) contacts are provided by residues 56 to 57 (DG), 132 to 133 (NE), arginine 158, aspartate 160, and 171 to 176 (TAYNKS).

This sequence belongs to the NAD kinase family. A divalent metal cation serves as cofactor.

The protein localises to the cytoplasm. It catalyses the reaction NAD(+) + ATP = ADP + NADP(+) + H(+). Involved in the regulation of the intracellular balance of NAD and NADP, and is a key enzyme in the biosynthesis of NADP. Catalyzes specifically the phosphorylation on 2'-hydroxyl of the adenosine moiety of NAD to yield NADP. This is NAD kinase from Streptococcus agalactiae serotype III (strain NEM316).